The chain runs to 617 residues: Proline--tRNA ligase (617 aa).

It belongs to the class-II aminoacyl-tRNA synthetase family. ProS type 1 subfamily. As to quaternary structure, homodimer.

The protein resides in the cytoplasm. The enzyme catalyses tRNA(Pro) + L-proline + ATP = L-prolyl-tRNA(Pro) + AMP + diphosphate. Its function is as follows. Catalyzes the attachment of proline to tRNA(Pro) in a two-step reaction: proline is first activated by ATP to form Pro-AMP and then transferred to the acceptor end of tRNA(Pro). As ProRS can inadvertently accommodate and process non-cognate amino acids such as alanine and cysteine, to avoid such errors it has two additional distinct editing activities against alanine. One activity is designated as 'pretransfer' editing and involves the tRNA(Pro)-independent hydrolysis of activated Ala-AMP. The other activity is designated 'posttransfer' editing and involves deacylation of mischarged Ala-tRNA(Pro). The misacylated Cys-tRNA(Pro) is not edited by ProRS. The chain is Proline--tRNA ligase from Streptococcus agalactiae serotype Ia (strain ATCC 27591 / A909 / CDC SS700).